A 107-amino-acid chain; its full sequence is uncharacterized protein (107 aa).

The disordered stretch occupies residues 86 to 107; sequence KRAETARLPAATPQKRTGPARG.

This is an uncharacterized protein from Saccharomyces cerevisiae (strain ATCC 204508 / S288c) (Baker's yeast).